We begin with the raw amino-acid sequence, 295 residues long: Indole-3-glycerol phosphate synthase (295 aa).

The protein belongs to the TrpC family.

It carries out the reaction 1-(2-carboxyphenylamino)-1-deoxy-D-ribulose 5-phosphate + H(+) = (1S,2R)-1-C-(indol-3-yl)glycerol 3-phosphate + CO2 + H2O. It functions in the pathway amino-acid biosynthesis; L-tryptophan biosynthesis; L-tryptophan from chorismate: step 4/5. This Prochlorococcus marinus (strain NATL1A) protein is Indole-3-glycerol phosphate synthase.